A 158-amino-acid chain; its full sequence is Large ribosomal subunit protein uL15 (158 aa).

Positions 1-13 (MKLNEIKDNEGST) are enriched in basic and acidic residues. Residues 1–45 (MKLNEIKDNEGSTHSRKRLGRGIGSGSGKTGGRGVKGQKSRSGVA) form a disordered region. Over residues 21–35 (RGIGSGSGKTGGRGV) the composition is skewed to gly residues.

Belongs to the universal ribosomal protein uL15 family. In terms of assembly, part of the 50S ribosomal subunit.

Functionally, binds to the 23S rRNA. The protein is Large ribosomal subunit protein uL15 of Rhizobium johnstonii (strain DSM 114642 / LMG 32736 / 3841) (Rhizobium leguminosarum bv. viciae).